The primary structure comprises 143 residues: Peptide methionine sulfoxide reductase MsrB (143 aa).

In terms of domain architecture, MsrB spans 5 to 126 (KEEKIKSLNR…NSAALRFVPK (122 aa)). Residue C115 is the Nucleophile of the active site.

The protein belongs to the MsrB Met sulfoxide reductase family.

It carries out the reaction L-methionyl-[protein] + [thioredoxin]-disulfide + H2O = L-methionyl-(R)-S-oxide-[protein] + [thioredoxin]-dithiol. The polypeptide is Peptide methionine sulfoxide reductase MsrB (Bacillus subtilis (strain 168)).